Here is a 450-residue protein sequence, read N- to C-terminus: Protein W (450 aa).

The segment at S53–V92 is disordered. A compositionally biased stretch (basic and acidic residues) spans M63–E76. S257 is subject to Phosphoserine; by host. Positions I265–R324 are disordered. S350 carries the phosphoserine; by host modification. Disordered stretches follow at residues V384–P403 and P429–N450. Residues T438–N450 are compositionally biased toward basic residues. The short motif at K439–R442 is the Nuclear localization signal element.

Interacts with host STAT1.

Its subcellular location is the host nucleus. Prevent the establishment of cellular antiviral state by blocking the interferon-alpha/beta (IFN-alpha/beta). Interacts with host STAT1 protein in the nucleus, blocking it's phosphorylation by IFN-alpha/beta. Also blocks antiviral state induced by Toll-like receptor 3/TLR3 binding to dsRNA. The polypeptide is Protein W (P/V/C) (Cynopterus brachyotis (Lesser short-nosed fruit bat)).